The primary structure comprises 61 residues: Metallothionein-II, hippocampal (61 aa).

Methionine 1 carries the N-acetylmethionine modification. A beta region spans residues 1-29 (MDPNCSCATGGSCTCANSCTCKACKCASC). Cysteine 5, cysteine 7, cysteine 13, cysteine 15, cysteine 19, cysteine 21, cysteine 24, cysteine 26, cysteine 29, cysteine 33, cysteine 34, cysteine 36, cysteine 37, cysteine 41, cysteine 44, cysteine 48, cysteine 50, cysteine 57, cysteine 59, and cysteine 60 together coordinate a divalent metal cation. Residues 30–61 (KKSCCSCCPVGCAKCAQGCICKGASDKCSCCA) are alpha.

The protein belongs to the metallothionein superfamily. Type 1 family.

In terms of biological role, metallothioneins have a high content of cysteine residues that bind various heavy metals; these proteins are transcriptionally regulated by both heavy metals and glucocorticoids. This isoform may play a role in regulating the transport, accumulation, and compartmentation of zinc in the hippocampus. The polypeptide is Metallothionein-II, hippocampal (Bos taurus (Bovine)).